Reading from the N-terminus, the 277-residue chain is Large ribosomal subunit protein uL2 (277 aa).

2 disordered regions span residues 24 to 55 (ITTSTPEKSLLRPLKKKAGRNNQGKLTVRHHG) and 221 to 277 (RGSV…RKKK).

It belongs to the universal ribosomal protein uL2 family. As to quaternary structure, part of the 50S ribosomal subunit. Forms a bridge to the 30S subunit in the 70S ribosome.

In terms of biological role, one of the primary rRNA binding proteins. Required for association of the 30S and 50S subunits to form the 70S ribosome, for tRNA binding and peptide bond formation. It has been suggested to have peptidyltransferase activity; this is somewhat controversial. Makes several contacts with the 16S rRNA in the 70S ribosome. This is Large ribosomal subunit protein uL2 from Listeria innocua serovar 6a (strain ATCC BAA-680 / CLIP 11262).